Consider the following 51-residue polypeptide: Large ribosomal subunit protein bL33 (51 aa).

The protein belongs to the bacterial ribosomal protein bL33 family.

In Acinetobacter baylyi (strain ATCC 33305 / BD413 / ADP1), this protein is Large ribosomal subunit protein bL33.